A 397-amino-acid polypeptide reads, in one-letter code: ORC1-type DNA replication protein 1 (397 aa).

ATP is bound by residues 67-71 (TGKTA), Tyr-208, and Arg-220.

It belongs to the CDC6/cdc18 family.

Functionally, involved in regulation of DNA replication. The polypeptide is ORC1-type DNA replication protein 1 (cdc6-1) (Sulfolobus acidocaldarius (strain ATCC 33909 / DSM 639 / JCM 8929 / NBRC 15157 / NCIMB 11770)).